A 386-amino-acid polypeptide reads, in one-letter code: Homoserine O-succinyltransferase (386 aa).

The AB hydrolase-1 domain maps to 49–358; it reads NAILICHALS…DAEQGHDSFL (310 aa). The Nucleophile role is filled by Ser-156. Residue Arg-226 coordinates substrate. Active-site residues include Asp-321 and His-354. Asp-355 serves as a coordination point for substrate.

It belongs to the AB hydrolase superfamily. MetX family. Homodimer.

It is found in the cytoplasm. It carries out the reaction L-homoserine + succinyl-CoA = O-succinyl-L-homoserine + CoA. It participates in amino-acid biosynthesis; L-methionine biosynthesis via de novo pathway; O-succinyl-L-homoserine from L-homoserine: step 1/1. Functionally, transfers a succinyl group from succinyl-CoA to L-homoserine, forming succinyl-L-homoserine. The polypeptide is Homoserine O-succinyltransferase (Acinetobacter baumannii (strain ACICU)).